We begin with the raw amino-acid sequence, 290 residues long: MSNKEGSGGFRKRKHDNFPHNQRREGKDVNSSSPVMLAFKSFQQELDARHDKYERLVKLSRDITVESKRTIFLLHRITSAPDMEDILTESEIKLDGVRQKIFQVAQELSGEDMHQFHRAITTGLQEYVEAVSFQHFIKTRSLISMDEINKQLIFTTEDNGKENKTPSSDAQDKQFGTWRLRVTPVDYLLGVADLTGELMRMCINSVGNGDIDTPFEVSQFLRQVYDGFSFIGNTGPYEVSKKLYTLKQSLAKVENACYALKVRGSEIPKHMLADVFSVKTEMIDQEEGIS.

The interval 1–32 is disordered; the sequence is MSNKEGSGGFRKRKHDNFPHNQRREGKDVNSS. A compositionally biased stretch (basic and acidic residues) spans 16 to 28; that stretch reads DNFPHNQRREGKD. The segment at 73 to 208 is interaction with C1D; that stretch reads LLHRITSAPD…MRMCINSVGN (136 aa). 2 residues coordinate Mg(2+): E129 and E197. K279 is covalently cross-linked (Glycyl lysine isopeptide (Lys-Gly) (interchain with G-Cter in SUMO2)).

It belongs to the translin family. As to quaternary structure, ring-shaped heterooctamer of six TSN and two TSNAX subunits. Interacts with GOLGA3, TSNAXIP1, SUN1 and AKAP9. Interacts with the homodimeric form of C1D following gamma-radiation. Interacts with TSN and C1D in a mutually exclusive manner. Post-translationally, sumoylated with SUMO1.

The protein resides in the cytoplasm. The protein localises to the perinuclear region. It is found in the golgi apparatus. It localises to the nucleus. In terms of biological role, acts in combination with TSN as an endonuclease involved in the activation of the RNA-induced silencing complex (RISC). Possible role in spermatogenesis. In Pongo abelii (Sumatran orangutan), this protein is Translin-associated protein X (TSNAX).